A 353-amino-acid chain; its full sequence is Protein RecA (353 aa).

Residue 68-75 participates in ATP binding; sequence GPESSGKT.

Belongs to the RecA family.

The protein localises to the cytoplasm. In terms of biological role, can catalyze the hydrolysis of ATP in the presence of single-stranded DNA, the ATP-dependent uptake of single-stranded DNA by duplex DNA, and the ATP-dependent hybridization of homologous single-stranded DNAs. It interacts with LexA causing its activation and leading to its autocatalytic cleavage. The sequence is that of Protein RecA from Roseiflexus sp. (strain RS-1).